The primary structure comprises 259 residues: MQNLLKIGKYELGSRLIVGSGKYKDFQTTKEATLASGSELITVAVRRLNITDPNKENLRDTFKGTNVKFLPNSAGCVTAEEAITTFRLTREATGIDLIKLEVIGDTQKTLYPDVIETIKACQILSKEGFIIMAYTSDDPIMAKRLEDAGAHAIMPLAAPIGSGLGIQNPYNIVFIREAVNLPVIVDAGIGCASDAAYAMELGADGVLTNTAIAGAQNPMMMAEAMKHAVIAGRMSYLSGRIQKRPYATASSPINGMIQF.

Residue K99 is the Schiff-base intermediate with DXP of the active site. 1-deoxy-D-xylulose 5-phosphate-binding positions include G161, 187–188 (AG), and 209–210 (NT).

This sequence belongs to the ThiG family. In terms of assembly, homotetramer. Forms heterodimers with either ThiH or ThiS.

The protein resides in the cytoplasm. The enzyme catalyses [ThiS sulfur-carrier protein]-C-terminal-Gly-aminoethanethioate + 2-iminoacetate + 1-deoxy-D-xylulose 5-phosphate = [ThiS sulfur-carrier protein]-C-terminal Gly-Gly + 2-[(2R,5Z)-2-carboxy-4-methylthiazol-5(2H)-ylidene]ethyl phosphate + 2 H2O + H(+). The protein operates within cofactor biosynthesis; thiamine diphosphate biosynthesis. Its function is as follows. Catalyzes the rearrangement of 1-deoxy-D-xylulose 5-phosphate (DXP) to produce the thiazole phosphate moiety of thiamine. Sulfur is provided by the thiocarboxylate moiety of the carrier protein ThiS. In vitro, sulfur can be provided by H(2)S. The protein is Thiazole synthase of Sulfurimonas denitrificans (strain ATCC 33889 / DSM 1251) (Thiomicrospira denitrificans (strain ATCC 33889 / DSM 1251)).